A 1169-amino-acid chain; its full sequence is MTLRIVSGRSGTGKSVFIHQEIVEQLKSDPLGHPIFIIVPDQMSYSTEYELTNRHGLQGLIRAQVMTFKRLAWLVLQETGGIARKEVNGYGYRMLIRKLLEEQKSEFSLFRQAAGKRGFTEEIETLLKEFSRYSVNSSVLAEVKESLKAIDAPNTLQAKTNDLYVVLQALEERLGTTYVDSEGYYPILTEQLKYAETMKQATIYIDGFTAFTVRELELVRELLKVTKHVTVVLPFDHIDEAFDEQALFHEAALTNQRLHDIANEEGIDVEPPLHFYYTQRFQSEDLQHVEANFANMVPHTKKTSGDVMVFEASNRRAEVHAIAREITKLTREYGYRYQDIVLLYRQAELYDPLITSIFQQYEIPIFTNTKKTMLHHPLIELSRSALEIMTSNWKYEPVFRSVKTDLFFPLQAELTIWRERADRLENYCLAQGIYGERWFEEPRWFYKKYRGLEFHSRVQTDEERAMQAEIEAIRDEIRQPLKSLQDKLSIASTGKDIATALFELVESLQVYEKLQAMKDRELERGDALAASEHEQAWNEWINVLDQFVYMFGEQEMSVEEAAKILDEGFDTLEFSRIPPTLDEVMVATVDLARLSNIKVAFVLGMNDGVYPTRMEYEGLLSDTEREWFSQIGYELAPTSSNRLLQENFLFYRAASTPSNKLYLTYPTADEEGKALLSSLYIKKFIGNDKIAGLLSGVQAERVVMDPIELLDESALPYLRHPRTALAHLMVQLRQAEHSRELAPEWLALQKFYQQDPYWALIFDRVHYPITHKNEAEPLETYITQELYGQKLTSSVSRIEKYFRCPFSHFTTYGLRLEERAEYRLETFAMGDLFHEALKWITEETHRLQLSWIRLTKQQIKQLARQAVEQIVPVFSHQILLSSARYRYIQRKLIRIVERTMMALTQHANVSHFKPIAIEASFGPGQHEQLPPLEIDLTSGKKMFMRGRIDRIDSATIDDRSYLRIVDYKSSARDLDLNEVYYGLSLQVLTYLDVAMENSTYWLPGETEPAGVLYVHVHNPMLKLDKDMTDSEIEEDRLKQYKMKGLLSENAESILSMDEQLEESSGHSKIIPVYMKKDGTPSESQSRIVPVNDMKRLQHFVRRKHQEAGNGILSGDTAISPYKLKSKTACDYCQFAAVCQFDPSDGKQNYRQLMQAKPNEIVDKIRKEIE.

The UvrD-like helicase ATP-binding domain maps to M1–M296. G8–S15 lines the ATP pocket. One can recognise a UvrD-like helicase C-terminal domain in the interval Y276–D582. The [4Fe-4S] cluster site is built by C804, C1129, C1132, and C1138.

This sequence belongs to the helicase family. AddB/RexB type 1 subfamily. Heterodimer of AddA and AddB. It depends on Mg(2+) as a cofactor. [4Fe-4S] cluster is required as a cofactor.

Functionally, the heterodimer acts as both an ATP-dependent DNA helicase and an ATP-dependent, dual-direction single-stranded exonuclease. Recognizes the chi site generating a DNA molecule suitable for the initiation of homologous recombination. The AddB subunit has 5' -&gt; 3' nuclease activity but not helicase activity. This chain is ATP-dependent helicase/deoxyribonuclease subunit B, found in Lysinibacillus sphaericus (strain C3-41).